A 700-amino-acid chain; its full sequence is Elongation factor G (700 aa).

A tr-type G domain is found at 8–290; it reads ERYRNIGISA…AVIDYLPAPT (283 aa). GTP is bound by residues 17–24, 88–92, and 142–145; these read AHIDAGKT, DTPGH, and NKMD.

The protein belongs to the TRAFAC class translation factor GTPase superfamily. Classic translation factor GTPase family. EF-G/EF-2 subfamily.

Its subcellular location is the cytoplasm. Functionally, catalyzes the GTP-dependent ribosomal translocation step during translation elongation. During this step, the ribosome changes from the pre-translocational (PRE) to the post-translocational (POST) state as the newly formed A-site-bound peptidyl-tRNA and P-site-bound deacylated tRNA move to the P and E sites, respectively. Catalyzes the coordinated movement of the two tRNA molecules, the mRNA and conformational changes in the ribosome. This Glaesserella parasuis serovar 5 (strain SH0165) (Haemophilus parasuis) protein is Elongation factor G.